The sequence spans 61 residues: Large ribosomal subunit protein uL30 (61 aa).

Belongs to the universal ribosomal protein uL30 family. In terms of assembly, part of the 50S ribosomal subunit.

The sequence is that of Large ribosomal subunit protein uL30 from Treponema denticola (strain ATCC 35405 / DSM 14222 / CIP 103919 / JCM 8153 / KCTC 15104).